A 1164-amino-acid chain; its full sequence is DNA-directed RNA polymerase 132 kDa polypeptide (1164 aa).

This sequence belongs to the RNA polymerase beta chain family. The DNA-dependent RNA polymerase used for intermediate and late genes expression consists of eight subunits (147) kDa, (133) kDa, (35) kDa, (30) kDa, (22) kDa, (19) kDa, (18) kDa and (7) kDa totalling more than 500 kDa in mass. The same holoenzyme, with the addition of the transcription-specificity factor RAP94, is used for early gene expression.

The protein resides in the virion. The catalysed reaction is RNA(n) + a ribonucleoside 5'-triphosphate = RNA(n+1) + diphosphate. Functionally, part of the DNA-dependent RNA polymerase which catalyzes the transcription of viral DNA into RNA using the four ribonucleoside triphosphates as substrates. Responsible for the transcription of early, intermediate and late genes. DNA-dependent RNA polymerase associates with the early transcription factor (ETF), itself composed of D6 and A7, thereby allowing the early genes transcription. Late transcription, and probably also intermediate transcription, require newly synthesized RNA polymerase. The sequence is that of DNA-directed RNA polymerase 132 kDa polypeptide (RPO132) from Mus musculus (Mouse).